A 404-amino-acid chain; its full sequence is Probable oxalate decarboxylase ARB_04859 (404 aa).

Positions 1–17 are cleaved as a signal peptide; that stretch reads MKYSAVLVAALAAIADA. The 142-residue stretch at 74–215 folds into the Cupin type-1 1 domain; sequence FSLSKTRMLY…NFGVPPSTFD (142 aa). The Mn(2+) site is built by His117, His119, Glu123, and His162. Residues Asn226 and Asn244 are each glycosylated (N-linked (GlcNAc...) asparagine). The Cupin type-1 2 domain maps to 249-393; that stretch reads FHISNAPEIQ…AINVPIEVIE (145 aa). Mn(2+)-binding residues include His296, His298, Glu303, and His342. The N-linked (GlcNAc...) asparagine glycan is linked to Asn346. The active-site Proton donor is the Glu357.

The cofactor is Mn(2+).

The protein localises to the secreted. The catalysed reaction is oxalate + H(+) = formate + CO2. In terms of biological role, converts oxalate to formate and CO(2) in an O(2)-dependent reaction. Can also catalyze minor side reactions: oxalate oxidation to produce H(2)O(2), and oxalate-dependent, H(2)O(2)-independent dye oxidations. The protein is Probable oxalate decarboxylase ARB_04859 of Arthroderma benhamiae (strain ATCC MYA-4681 / CBS 112371) (Trichophyton mentagrophytes).